We begin with the raw amino-acid sequence, 639 residues long: 3-oxocholoyl-CoA 4-desaturase (639 aa).

Residue glutamine 101 participates in FMN binding. Histidine 155–histidine 158 provides a ligand contact to substrate. Tyrosine 160 acts as the Proton donor in catalysis. FMN-binding positions include arginine 208, arginine 286, and glycine 308–arginine 309. Residues cysteine 332 and cysteine 335 each contribute to the [4Fe-4S] cluster site. Position 337 (glutamine 337) interacts with FAD. [4Fe-4S] cluster contacts are provided by cysteine 339 and cysteine 353. 5 residues coordinate FAD: alanine 383, glutamate 402, glutamine 410, lysine 420, and valine 447.

In the N-terminal section; belongs to the NADH:flavin oxidoreductase/NADH oxidase family. FMN serves as cofactor. Requires FAD as cofactor. It depends on [4Fe-4S] cluster as a cofactor.

It catalyses the reaction 7alpha,12alpha-dihydroxy-3-oxochol-24-oyl-CoA + NAD(+) = 7alpha,12alpha-dihydroxy-3-oxochol-4-en-24-oyl-CoA + NADH + H(+). It carries out the reaction 7alpha-hydroxy-3-oxochol-24-oyl-CoA + NAD(+) = 7alpha-hydroxy-3-oxochol-4-en-24-oyl-CoA + NADH + H(+). It functions in the pathway lipid metabolism; bile acid degradation. Stereo-specific NAD(H)-dependent 3-oxo-delta4-cholenoic acid oxidoreductase involved in bile acid 7alpha-dehydroxylation. This is 3-oxocholoyl-CoA 4-desaturase from Clostridium scindens (strain JCM 10418 / VPI 12708).